Here is a 503-residue protein sequence, read N- to C-terminus: Glutamate--tRNA ligase (503 aa).

Positions 26-36 (PSPTGTPHVGL) match the 'HIGH' region motif. Positions 126 to 148 (TPEEVEARHRAAGRDPKLGYDNA) are disordered. A compositionally biased stretch (basic and acidic residues) spans 130-148 (VEARHRAAGRDPKLGYDNA). Positions 270–274 (KLSKR) match the 'KMSKS' region motif. ATP is bound at residue K273.

It belongs to the class-I aminoacyl-tRNA synthetase family. Glutamate--tRNA ligase type 1 subfamily. As to quaternary structure, monomer.

It localises to the cytoplasm. The enzyme catalyses tRNA(Glu) + L-glutamate + ATP = L-glutamyl-tRNA(Glu) + AMP + diphosphate. Catalyzes the attachment of glutamate to tRNA(Glu) in a two-step reaction: glutamate is first activated by ATP to form Glu-AMP and then transferred to the acceptor end of tRNA(Glu). The protein is Glutamate--tRNA ligase of Saccharopolyspora erythraea (strain ATCC 11635 / DSM 40517 / JCM 4748 / NBRC 13426 / NCIMB 8594 / NRRL 2338).